The sequence spans 31 residues: Cytochrome b6-f complex subunit 6 (31 aa).

A helical transmembrane segment spans residues 3-23; that stretch reads TLTSYFGFLLVALTITLVLFI.

This sequence belongs to the PetL family. As to quaternary structure, the 4 large subunits of the cytochrome b6-f complex are cytochrome b6, subunit IV (17 kDa polypeptide, PetD), cytochrome f and the Rieske protein, while the 4 small subunits are PetG, PetL, PetM and PetN. The complex functions as a dimer.

Its subcellular location is the plastid. The protein localises to the chloroplast thylakoid membrane. Component of the cytochrome b6-f complex, which mediates electron transfer between photosystem II (PSII) and photosystem I (PSI), cyclic electron flow around PSI, and state transitions. PetL is important for photoautotrophic growth as well as for electron transfer efficiency and stability of the cytochrome b6-f complex. The polypeptide is Cytochrome b6-f complex subunit 6 (Populus alba (White poplar)).